We begin with the raw amino-acid sequence, 661 residues long: Glycogen debranching enzyme (661 aa).

Aspartate 338 acts as the Nucleophile in catalysis. Glutamate 373 (proton donor) is an active-site residue. The tract at residues 460–481 (NQLNGEGNRDGSDRNFSNNHGV) is disordered.

This sequence belongs to the glycosyl hydrolase 13 family.

It carries out the reaction Hydrolysis of (1-&gt;6)-alpha-D-glucosidic linkages to branches with degrees of polymerization of three or four glucose residues in limit dextrin.. Its pathway is glycan degradation; glycogen degradation. In terms of biological role, removes maltotriose and maltotetraose chains that are attached by 1,6-alpha-linkage to the limit dextrin main chain, generating a debranched limit dextrin. This Serratia proteamaculans (strain 568) protein is Glycogen debranching enzyme.